Here is a 505-residue protein sequence, read N- to C-terminus: MEDKVLIAVGTVAVVAVLSKLKSAVTKPKLNLPPGPWTLPLIGSIHHIVSNPLPYRAMRELAHKHGPLMMLWLGEVPTLVVSSPEAAQAITKTHDVSFADRHINSTVDILTFNGMDMVFGSYGEQWRQLRKLSVLELLSAARVQSFQRIREEEVARFMRSLAASASAGATVDLSKMISSFINDTFVRESIGSRCKYQDEYLAALDTAIRVAAELSVGNIFPSSRVLQSLSTARRKAIASRDEMARILGQIIRETKESMDQGDKTSNESMISVLLRLQKDAGLPIELTDNVVMALMFDLFGAGSDTSSTTLTWCMTELVRYPATMAKAQAEVREAFKGKTTITEDDLSTANLRYLKLVVKEALRLHCPVPLLLPRKCREACQVMGYDIPKGTCVFVNVWAICRDPRYWEDAEEFKPERFENSNLDYKGTYYEYLPFGSGRRMCPGANLGVANLELALASLLYHFDWKLPSGQEPKDVDVWEAAGLVAKKNIGLVLHPVSHIAPVNA.

Residues 7–26 (IAVGTVAVVAVLSKLKSAVT) traverse the membrane as a helical segment. Position 442 (cysteine 442) interacts with heme.

This sequence belongs to the cytochrome P450 family. It depends on heme as a cofactor.

The protein resides in the membrane. It catalyses the reaction (S)-beta-macrocarpene + 3 reduced [NADPH--hemoprotein reductase] + 3 O2 = zealexin A1 + 3 oxidized [NADPH--hemoprotein reductase] + 4 H2O + 4 H(+). Its function is as follows. Involved in production of the antifungal phytoalexin zealexin A1. The enzyme sequentially oxidizes(S)-beta-macrocarpene via alcohol and aldehyde intermediates to form zealexin A1, a maize phytoalexin that provides biochemical protection against fungal infection. The protein is Zealexin A1 synthase of Zea mays (Maize).